Reading from the N-terminus, the 155-residue chain is Transcription antitermination protein NusB (155 aa).

Belongs to the NusB family.

Involved in transcription antitermination. Required for transcription of ribosomal RNA (rRNA) genes. Binds specifically to the boxA antiterminator sequence of the ribosomal RNA (rrn) operons. The protein is Transcription antitermination protein NusB of Vibrio parahaemolyticus serotype O3:K6 (strain RIMD 2210633).